The sequence spans 601 residues: Putative purine permease C1399.01c (601 aa).

12 consecutive transmembrane segments (helical) span residues 64–84, 102–122, 131–151, 179–199, 207–227, 264–284, 294–314, 337–357, 424–444, 450–470, 481–501, and 522–542; these read VPVL…VGGV, TNYL…IQIA, YYIG…VSVA, YGAF…MSFI, LFPP…LISS, GWGS…IIII, TTSV…TGYW, IYGP…MEAI, FFCA…AVFV, VLGG…IAII, FILT…DWFT, and LVME…NLIL.

It belongs to the nucleobase:cation symporter-2 (NCS2) (TC 2.A.40) family.

It is found in the vacuole membrane. The sequence is that of Putative purine permease C1399.01c from Schizosaccharomyces pombe (strain 972 / ATCC 24843) (Fission yeast).